The primary structure comprises 274 residues: Large ribosomal subunit protein uL2 (274 aa).

The interval 221 to 274 is disordered; that stretch reads RGTAMNPVDHPHGGGEGRNFGKHPVTPWGVQTKGKKTRSNKRTDKFIVRRRSKK.

Belongs to the universal ribosomal protein uL2 family. As to quaternary structure, part of the 50S ribosomal subunit. Forms a bridge to the 30S subunit in the 70S ribosome.

One of the primary rRNA binding proteins. Required for association of the 30S and 50S subunits to form the 70S ribosome, for tRNA binding and peptide bond formation. It has been suggested to have peptidyltransferase activity; this is somewhat controversial. Makes several contacts with the 16S rRNA in the 70S ribosome. This Yersinia pseudotuberculosis serotype O:1b (strain IP 31758) protein is Large ribosomal subunit protein uL2.